The sequence spans 220 residues: Uracil phosphoribosyltransferase 2 (220 aa).

77-80 is a binding site for GTP; sequence ARDI. Residues Arg-87 and Arg-113 each contribute to the 5-phospho-alpha-D-ribose 1-diphosphate site. Residue Arg-134 participates in GTP binding. 5-phospho-alpha-D-ribose 1-diphosphate-binding positions include Asp-140 and 140–148; that span reads DPLLATGNS. Tyr-204 lines the D-ribose 5-phosphate pocket. Uracil-binding positions include Val-205 and 210 to 212; that span reads GDF. Asp-211 is a 5-phospho-alpha-D-ribose 1-diphosphate binding site.

Belongs to the UPRTase family. The cofactor is Mg(2+).

It catalyses the reaction UMP + diphosphate = 5-phospho-alpha-D-ribose 1-diphosphate + uracil. The protein operates within pyrimidine metabolism; UMP biosynthesis via salvage pathway; UMP from uracil: step 1/1. Its activity is regulated as follows. Allosterically activated by GTP. In terms of biological role, catalyzes the conversion of uracil and 5-phospho-alpha-D-ribose 1-diphosphate (PRPP) to UMP and diphosphate. This is Uracil phosphoribosyltransferase 2 from Schizosaccharomyces pombe (strain 972 / ATCC 24843) (Fission yeast).